The sequence spans 1460 residues: Venom prothrombin activator omicarin-C non-catalytic subunit (1460 aa).

The N-terminal stretch at 1–30 (MGRYSVSPVPKCLLLMFLGWSGLKYYQVNA) is a signal peptide. Plastocyanin-like domains follow at residues 32-196 (QLRE…LLIC), 206-330 (AQKF…LNIK), 351-529 (MNWE…LLVC), and 539-685 (VQNK…FLDA). 2 consecutive F5/8 type A domains span residues 32 to 330 (QLRE…LNIK) and 350 to 685 (IMNW…FLDA). 4 residues coordinate Ca(2+): Lys124, Glu139, Asp142, and Asp143. N-linked (GlcNAc...) asparagine glycosylation is present at Asn156. Cysteines 170 and 196 form a disulfide. N-linked (GlcNAc...) asparagine glycosylation is found at Asn242, Asn300, Asn385, Asn406, and Asn471. A disulfide bridge links Cys251 with Cys332. The cysteines at positions 503 and 529 are disulfide-linked. The N-linked (GlcNAc...) asparagine glycan is linked to Asn557. Intrachain disulfides connect Cys672/Cys1031, Cys965/Cys991, Cys1147/Cys1298, and Cys1303/Cys1457. Residues 693 to 817 (GNEEEEEDDG…SDDIAGRYLR (125 aa)) form a b region. A disordered region spans residues 740 to 760 (LLDDEDNPEQSRSEQTEDDEE). A propeptide spans 772–817 (SFKGSVAEEELKHTALALEEDAHASDPRIDSNSARNSDDIAGRYLR) (activation peptide (connecting region)). 2 consecutive Plastocyanin-like domains span residues 823-991 (NKRR…ILIC) and 1000-1143 (NRTI…FTVI). Residues 823 to 1143 (NKRRYYIAAE…RGMQALFTVI (321 aa)) form the F5/8 type A 3 domain. Lys919, Phe934, Asp937, and Asp938 together coordinate Ca(2+). N-linked (GlcNAc...) asparagine glycosylation is present at Asn943. 3 N-linked (GlcNAc...) asparagine glycosylation sites follow: Asn1000, Asn1180, and Asn1397. F5/8 type C domains lie at 1147-1298 (CKLP…LLGC) and 1303-1457 (CSVP…LFGC).

This sequence belongs to the multicopper oxidase family. As to quaternary structure, heterodimer of a light and a heavy chains; non-disulfide-linked. The interaction between the two chains is calcium-dependent. Found in its active form associated with omicarin-C catalytic subunit (AC Q58L95). In terms of processing, in physiological conditions, blood coagulation factor V and factor Va are inactivated by activated protein C (APC) through proteolytic degradation of the heavy chain. However, omicarin-C non-catalytic subunit (factor V-like protein) retains its full activity even at high concentration of APC. This has two explanations: this protein has only one of the three cleavage sites present in factor V that are targeted by the APC for inactivation, and the binding with the catalytic subunit protect the cleavage site from inactivation. Expressed by the venom gland.

It is found in the secreted. In terms of biological role, snake prothrombin activator that attacks the hemostatic system of prey. This non-catalytic subunit is functionally similar to blood coagulation factor V. It serves as a critical cofactor for the prothrombinase activity of the catalytic subunit, which is similar to the blood coagulation factor X. The complex converts prothrombin to thrombin by sequential cleavage at two positions, Arg-320 followed by Arg-271. Cleavage at Arg-320 produces an active intermediate known as meizothrombin. Meizothrombin is the 'second' substrate for prothrombinase, and it docks in an altered manner to present the second cleavage site (271). Cleavage at Arg-271 releases active thrombin from its pro-fragment. This order of events is reversed if the protease component of prothrombinase is used on its own, suggesting that the 271 site is inherently more accessible to proteolysis. This is Venom prothrombin activator omicarin-C non-catalytic subunit from Oxyuranus microlepidotus (Inland taipan).